The sequence spans 222 residues: LHFPL tetraspan subfamily member 3 protein (222 aa).

The next 4 membrane-spanning stretches (helical) occupy residues 22-42 (IGVL…VCFI), 96-116 (FFIG…TLFF), 126-146 (ICAW…MIFP), and 177-197 (ILAI…VVLG).

The protein belongs to the LHFP family. As to expression, brain-specific.

The protein resides in the membrane. This chain is LHFPL tetraspan subfamily member 3 protein, found in Mus musculus (Mouse).